The primary structure comprises 201 residues: GTP cyclohydrolase 1 (201 aa).

Positions 90, 93, and 163 each coordinate Zn(2+).

The protein belongs to the GTP cyclohydrolase I family. As to quaternary structure, homomer.

It catalyses the reaction GTP + H2O = 7,8-dihydroneopterin 3'-triphosphate + formate + H(+). It participates in cofactor biosynthesis; 7,8-dihydroneopterin triphosphate biosynthesis; 7,8-dihydroneopterin triphosphate from GTP: step 1/1. In Streptomyces griseus subsp. griseus (strain JCM 4626 / CBS 651.72 / NBRC 13350 / KCC S-0626 / ISP 5235), this protein is GTP cyclohydrolase 1.